The primary structure comprises 57 residues: Large ribosomal subunit protein bL32 (57 aa).

It belongs to the bacterial ribosomal protein bL32 family.

The protein is Large ribosomal subunit protein bL32 of Bacillus pumilus (strain SAFR-032).